Consider the following 195-residue polypeptide: Imidazoleglycerol-phosphate dehydratase (195 aa).

It belongs to the imidazoleglycerol-phosphate dehydratase family.

Its subcellular location is the cytoplasm. It catalyses the reaction D-erythro-1-(imidazol-4-yl)glycerol 3-phosphate = 3-(imidazol-4-yl)-2-oxopropyl phosphate + H2O. It functions in the pathway amino-acid biosynthesis; L-histidine biosynthesis; L-histidine from 5-phospho-alpha-D-ribose 1-diphosphate: step 6/9. The protein is Imidazoleglycerol-phosphate dehydratase of Frankia casuarinae (strain DSM 45818 / CECT 9043 / HFP020203 / CcI3).